Here is a 399-residue protein sequence, read N- to C-terminus: Elongation factor Tu (399 aa).

The region spanning 10-209 (KPHVNIGTIG…EVDAYIPTPE (200 aa)) is the tr-type G domain. A G1 region spans residues 19–26 (GHVDHGKT). Residue 19-26 (GHVDHGKT) participates in GTP binding. Position 26 (Thr-26) interacts with Mg(2+). The segment at 60 to 64 (GITIA) is G2. Residues 81 to 84 (DCPG) form a G3 region. GTP contacts are provided by residues 81–85 (DCPGH) and 136–139 (NKQD). Residues 136 to 139 (NKQD) are G4. The segment at 174-176 (SAL) is G5.

It belongs to the TRAFAC class translation factor GTPase superfamily. Classic translation factor GTPase family. EF-Tu/EF-1A subfamily. In terms of assembly, monomer.

It is found in the cytoplasm. The catalysed reaction is GTP + H2O = GDP + phosphate + H(+). Its function is as follows. GTP hydrolase that promotes the GTP-dependent binding of aminoacyl-tRNA to the A-site of ribosomes during protein biosynthesis. This chain is Elongation factor Tu, found in Helicobacter pylori (strain G27).